Consider the following 130-residue polypeptide: Small ribosomal subunit protein uS9 (130 aa).

Residues R109 to R130 form a disordered region. Basic residues predominate over residues K111–R130.

Belongs to the universal ribosomal protein uS9 family.

In Clostridium kluyveri (strain NBRC 12016), this protein is Small ribosomal subunit protein uS9.